The sequence spans 302 residues: S-adenosylmethionine sensor upstream of mTORC1 (302 aa).

S-adenosyl-L-homocysteine-binding residues include R73, G132, and D150. 7 residues coordinate S-adenosyl-L-methionine: R73, G132, D150, L151, D162, F163, and S196. 3 residues coordinate S-adenosyl-L-homocysteine: D162, F163, and S196.

This sequence belongs to the BMT2/SAMTOR family.

Its function is as follows. S-adenosyl-L-methionine-binding protein. It is unclear whether this protein acts as a sensor of S-adenosyl-L-methionine to signal methionine sufficiency to mTORC1. Probably acts as a S-adenosyl-L-methionine-dependent methyltransferase. This Drosophila melanogaster (Fruit fly) protein is S-adenosylmethionine sensor upstream of mTORC1.